We begin with the raw amino-acid sequence, 197 residues long: DnaJ homolog subfamily C member 5 (197 aa).

Residues 13–82 form the J domain; that stretch reads GESLYHVLGL…RNIYDKYGSL (70 aa). The interval 153-197 is disordered; that stretch reads EDLEAQMQSDERDTEGPVLVQPASATETTQLTSDSHASYHTDGFN. Residues 175-197 show a composition bias toward polar residues; the sequence is ASATETTQLTSDSHASYHTDGFN.

In terms of processing, palmitoylated. Palmitoylation occurs probably in the cysteine-rich domain and regulates DNAJC5 stable membrane attachment.

The protein localises to the cytoplasm. It localises to the cytosol. Its subcellular location is the membrane. The protein resides in the cytoplasmic vesicle. It is found in the secretory vesicle. The protein localises to the chromaffin granule membrane. It localises to the melanosome. Its subcellular location is the cell membrane. May have an important role in presynaptic function. May be involved in calcium-dependent neurotransmitter release at nerve endings. The protein is DnaJ homolog subfamily C member 5 of Xenopus laevis (African clawed frog).